A 194-amino-acid polypeptide reads, in one-letter code: Peptidyl-tRNA hydrolase (194 aa).

Tyr-16 provides a ligand contact to tRNA. The active-site Proton acceptor is His-21. TRNA is bound by residues Phe-67, Asn-69, and Asn-115.

The protein belongs to the PTH family. Monomer.

Its subcellular location is the cytoplasm. The catalysed reaction is an N-acyl-L-alpha-aminoacyl-tRNA + H2O = an N-acyl-L-amino acid + a tRNA + H(+). Its function is as follows. Hydrolyzes ribosome-free peptidyl-tRNAs (with 1 or more amino acids incorporated), which drop off the ribosome during protein synthesis, or as a result of ribosome stalling. In terms of biological role, catalyzes the release of premature peptidyl moieties from peptidyl-tRNA molecules trapped in stalled 50S ribosomal subunits, and thus maintains levels of free tRNAs and 50S ribosomes. This is Peptidyl-tRNA hydrolase from Shigella dysenteriae serotype 1 (strain Sd197).